The sequence spans 141 residues: Nucleoside diphosphate kinase (141 aa).

Residues lysine 11, phenylalanine 59, arginine 87, threonine 93, arginine 104, and asparagine 114 each contribute to the ATP site. Residue histidine 117 is the Pros-phosphohistidine intermediate of the active site.

The protein belongs to the NDK family. In terms of assembly, homotetramer. Mg(2+) is required as a cofactor.

It localises to the cytoplasm. It carries out the reaction a 2'-deoxyribonucleoside 5'-diphosphate + ATP = a 2'-deoxyribonucleoside 5'-triphosphate + ADP. It catalyses the reaction a ribonucleoside 5'-diphosphate + ATP = a ribonucleoside 5'-triphosphate + ADP. Its function is as follows. Major role in the synthesis of nucleoside triphosphates other than ATP. The ATP gamma phosphate is transferred to the NDP beta phosphate via a ping-pong mechanism, using a phosphorylated active-site intermediate. The chain is Nucleoside diphosphate kinase from Ralstonia nicotianae (strain ATCC BAA-1114 / GMI1000) (Ralstonia solanacearum).